The chain runs to 158 residues: Transcription elongation factor GreA (158 aa).

A coiled-coil region spans residues 47 to 75 (ENSEYDAAKDEQAFVEQRITQVEKMIRNA).

The protein belongs to the GreA/GreB family.

In terms of biological role, necessary for efficient RNA polymerase transcription elongation past template-encoded arresting sites. The arresting sites in DNA have the property of trapping a certain fraction of elongating RNA polymerases that pass through, resulting in locked ternary complexes. Cleavage of the nascent transcript by cleavage factors such as GreA or GreB allows the resumption of elongation from the new 3'terminus. GreA releases sequences of 2 to 3 nucleotides. The chain is Transcription elongation factor GreA from Oceanobacillus iheyensis (strain DSM 14371 / CIP 107618 / JCM 11309 / KCTC 3954 / HTE831).